Consider the following 1558-residue polypeptide: Calmodulin-regulated spectrin-associated protein 1-B (1558 aa).

The region spanning 231–346 is the Calponin-homology (CH) domain; the sequence is WYWKLVPVRY…FIAELFWWFE (116 aa). Polar residues-rich tracts occupy residues 400–417, 440–450, and 504–516; these read VQNSPEVCNSNKGSSGFS, ACRNRSNSLTQ, and ASTVTPKHQSHPG. Disordered stretches follow at residues 400-464, 504-523, 551-585, 602-675, 737-790, 803-850, and 943-968; these read VQNS…SDKR, ASTVTPKHQSHPGQGSVRRI, NDITLTNSEDTERQGVTPGAKSIWGRQEDASSDSR, AKEK…APGQ, TKEL…VASG, QRFG…QNKD, and DRSKEAEEPEKASCEWAGGGTVSSSP. Positions 602 to 620 are enriched in basic and acidic residues; that stretch reads AKEKSISLNKEEESGEGRQ. Residues 643–658 are compositionally biased toward polar residues; the sequence is QTLNRTFTPNTSSEFE. A compositionally biased stretch (basic and acidic residues) spans 737–772; that stretch reads TKELHPDKKQHFEEEVESAKLREDMNVKEHEDKDGG. Low complexity-rich tracts occupy residues 776-790 and 812-822; these read SSPGQQSQVSSVASG and RSSTSSSQRTT. A coiled-coil region spans residues 849 to 887; it reads KDNANMLASELVQLHMQLEEKRRAIESQKKKMEILTARQ. Positions 943-955 are enriched in basic and acidic residues; sequence DRSKEAEEPEKAS. Residues 971–1004 are a coiled coil; sequence VEEEVDLNECNRSIELLNEAIGSIQQQMMQLSLQ. 4 disordered regions span residues 1041-1131, 1257-1293, 1305-1344, and 1360-1414; these read FVEP…TFHL, LRKQQLEAESEQKRDETRRKAEEERIRKEEEKARREL, ELCEEQEQPQPKPKTKPKKQRLKSVVKEEPSIDPLPKCPA, and LASV…ITST. Residues 1080–1090 show a composition bias toward low complexity; the sequence is SSTPTPTDSPS. Polar residues predominate over residues 1106-1115; the sequence is DFVQSSVRSE. Positions 1243 to 1303 form a coiled coil; sequence AFLLKQQRKA…IKQEYLRKKQ (61 aa). Residues 1317 to 1328 show a composition bias toward basic residues; that stretch reads PKTKPKKQRLKS. One can recognise a CKK domain in the interval 1421–1555; the sequence is GPKLFKEPSA…QAKRPAGPKK (135 aa).

This sequence belongs to the CAMSAP1 family.

It is found in the cytoplasm. It localises to the cytoskeleton. Key microtubule-organizing protein that specifically binds the minus-end of non-centrosomal microtubules and regulates their dynamics and organization. Specifically recognizes growing microtubule minus-ends and stabilizes microtubules. Acts on free microtubule minus-ends that are not capped by microtubule-nucleating proteins or other factors and protects microtubule minus-ends from depolymerization. In contrast to camsap2 and camsap3, tracks along the growing tips of minus-end microtubules without significantly affecting the polymerization rate: binds at the very tip of the microtubules minus-end and acts as a minus-end tracking protein (-TIP) that dissociates from microtubules after allowing tubulin incorporation. Through interaction with spectrin may regulate neurite outgrowth. The protein is Calmodulin-regulated spectrin-associated protein 1-B (camsap1b) of Danio rerio (Zebrafish).